The following is a 617-amino-acid chain: Acyl-CoA dehydrogenase family member 11 (617 aa).

A disordered region spans residues 1 to 47 (MHRIGNAVRMASSSSANATITARHTQYSHAKTGGFSQTGPTLHNPYK). Residues 11-22 (ASSSSANATITA) are compositionally biased toward low complexity. Residues 23 to 41 (RHTQYSHAKTGGFSQTGPT) are compositionally biased toward polar residues. FAD is bound by residues 206–215 (QWMTEKKGGS) and 241–243 (FSS). Ser215 contacts substrate. Positions 267 and 334 each coordinate substrate. Residues Arg359, 366 to 369 (QSKW), Glu437, Gly441, and 464 to 466 (EGT) each bind FAD.

Belongs to the acyl-CoA dehydrogenase family. In terms of assembly, homotetramer; dimer of dimers.

Functionally, promotes adaption to elevated temperatures by regulating expression of the lipid desaturase, fat-7. Binds selectively and with high affinity to fatty acids with chain lengths from C10 to C12 and prevents them from activating fat-7 expression mediated by the nuclear hormone receptor nhr-49, leading to low levels of membrane lipid desaturation and membrane fluidity for adaption to heat. The chain is Acyl-CoA dehydrogenase family member 11 from Caenorhabditis elegans.